We begin with the raw amino-acid sequence, 394 residues long: Putative bacilysin exporter BacE (394 aa).

The next 11 membrane-spanning stretches (helical) occupy residues 11-31 (LLYG…ALLI), 43-63 (SGVI…GVLV), 69-89 (IKIM…LTFL), 92-112 (GEYP…GVFF), 142-162 (IIVG…ELAV), 166-186 (GVTY…FVPI), 215-235 (MFTM…FPIV), 244-264 (IGNF…AALV), 288-308 (LFLF…FFIA), 332-352 (IFSV…MFIN), and 353-373 (ILSA…LFLH).

It belongs to the major facilitator superfamily. Drug:H(+) antiporter-3 (DHA3) (TC 2.A.1.21) family.

Its subcellular location is the cell membrane. Its function is as follows. Part of the bacilysin biosynthesis operon. May be involved in self-resistance to bacilysin by permitting efflux of this antibiotic. The sequence is that of Putative bacilysin exporter BacE (bacE) from Bacillus subtilis (strain 168).